Consider the following 504-residue polypeptide: Cytochrome P450 4A24 (504 aa).

2 helical membrane passes run 6–26 (LASA…LLLL) and 112–132 (VVYR…NGQT). Heme is bound at residue C451.

Belongs to the cytochrome P450 family. The cofactor is heme.

Its subcellular location is the endoplasmic reticulum membrane. The catalysed reaction is an omega-methyl-long-chain fatty acid + reduced [NADPH--hemoprotein reductase] + O2 = an omega-hydroxy-long-chain fatty acid + oxidized [NADPH--hemoprotein reductase] + H2O + H(+). Its function is as follows. Catalyzes the omega- and (omega-1)-hydroxylation of various fatty acids such as laurate and palmitate. Has no activity toward taurochenodeoxycholic acid. This Sus scrofa (Pig) protein is Cytochrome P450 4A24 (CYP4A24).